Here is a 431-residue protein sequence, read N- to C-terminus: Salivary plasminogen activator beta (431 aa).

The N-terminal stretch at 1–36 is a signal peptide; that stretch reads MVNTMKTKLLCVLLLCGAVFSLPRQETYRQLARGSR. The region spanning 37 to 75 is the EGF-like domain; that stretch reads AYGGCSELRCFNGGTCWQAASFSDFVCQCPKGYTGKQCE. 12 disulfides stabilise this stretch: C41/C52, C46/C63, C65/C74, C82/C163, C103/C145, C134/C158, C168/C299, C211/C227, C219/C288, C313/C388, C345/C361, and C378/C406. Residues 82 to 163 form the Kringle domain; that stretch reads CYKDQGVTYR…ILEFCSVPVC (82 aa). Residue N139 is glycosylated (N-linked (GlcNAc...) asparagine). The Peptidase S1 domain maps to 180–430; sequence STGGLFTDIT…YLGWIRDNMR (251 aa). Residues H226 and D275 each act as charge relay system in the active site. An N-linked (GlcNAc...) asparagine glycan is attached at N352. The active-site Charge relay system is S382.

The protein belongs to the peptidase S1 family. Monomer.

The protein localises to the secreted. The catalysed reaction is Specific cleavage of Arg-|-Val bond in plasminogen to form plasmin.. Functionally, probably essential to support the feeding habits of this exclusively haematophagous animal. Probable potent thrombolytic agent. In Desmodus rotundus (Vampire bat), this protein is Salivary plasminogen activator beta.